The sequence spans 351 residues: Epoxyqueuosine reductase (351 aa).

Asp-131 functions as the Proton donor in the catalytic mechanism. A 4Fe-4S ferredoxin-type domain is found at 177–205 (EDQPVDYGCGSCTRCVDFCPTKALLGDGR). 8 residues coordinate [4Fe-4S] cluster: Cys-185, Cys-188, Cys-191, Cys-195, Cys-211, Cys-237, Cys-240, and Cys-244.

The protein belongs to the QueG family. As to quaternary structure, monomer. Cob(II)alamin serves as cofactor. Requires [4Fe-4S] cluster as cofactor.

The protein localises to the cytoplasm. It catalyses the reaction epoxyqueuosine(34) in tRNA + AH2 = queuosine(34) in tRNA + A + H2O. Its pathway is tRNA modification; tRNA-queuosine biosynthesis. Catalyzes the conversion of epoxyqueuosine (oQ) to queuosine (Q), which is a hypermodified base found in the wobble positions of tRNA(Asp), tRNA(Asn), tRNA(His) and tRNA(Tyr). This Lactococcus garvieae (strain Lg2) (Enterococcus seriolicida) protein is Epoxyqueuosine reductase.